The sequence spans 66 residues: Alpha-actitoxin-Ms11a-1 (66 aa).

The first 24 residues, 1-24 (MASKIFFVLAVFLVMSAVLPESFA), serve as a signal peptide directing secretion. Cystine bridges form between C26–C41, C33–C46, and C40–C61.

The protein resides in the secreted. The protein localises to the nematocyst. Alpha-toxins act on postsynaptic membranes, they bind to the nicotinic acetylcholine receptors (nAChR) and thus inhibit them. This toxin competes with alpha-bungarotoxin for binding to orthosteric sites on muscle-type T.carlifornicus (IC(50)=408 nM) and human alpha-7/CHRNA7 nAChRs (IC(50)=14.16 uM). This chain is Alpha-actitoxin-Ms11a-1, found in Metridium senile (Brown sea anemone).